Here is a 292-residue protein sequence, read N- to C-terminus: Bifunctional protein FolD (292 aa).

NADP(+) is bound by residues 161 to 163 and isoleucine 231; that span reads GRS.

This sequence belongs to the tetrahydrofolate dehydrogenase/cyclohydrolase family. Homodimer.

The enzyme catalyses (6R)-5,10-methylene-5,6,7,8-tetrahydrofolate + NADP(+) = (6R)-5,10-methenyltetrahydrofolate + NADPH. The catalysed reaction is (6R)-5,10-methenyltetrahydrofolate + H2O = (6R)-10-formyltetrahydrofolate + H(+). Its pathway is one-carbon metabolism; tetrahydrofolate interconversion. Catalyzes the oxidation of 5,10-methylenetetrahydrofolate to 5,10-methenyltetrahydrofolate and then the hydrolysis of 5,10-methenyltetrahydrofolate to 10-formyltetrahydrofolate. The protein is Bifunctional protein FolD of Protochlamydia amoebophila (strain UWE25).